The primary structure comprises 429 residues: Adenylosuccinate synthetase (429 aa).

GTP-binding positions include 12 to 18 and 40 to 42; these read GDEGKGK and GHT. Aspartate 13 acts as the Proton acceptor in catalysis. 2 residues coordinate Mg(2+): aspartate 13 and glycine 40. Residues 13-16, 38-41, threonine 129, arginine 143, glutamine 223, threonine 238, and arginine 302 each bind IMP; these read DEGK and NAGH. Residue histidine 41 is the Proton donor of the active site. Residue 298-304 coordinates substrate; sequence VVTGRKR. Residues arginine 304, 330-332, and 412-414 contribute to the GTP site; these read KLD and STS.

This sequence belongs to the adenylosuccinate synthetase family. In terms of assembly, homodimer. It depends on Mg(2+) as a cofactor.

The protein resides in the cytoplasm. It catalyses the reaction IMP + L-aspartate + GTP = N(6)-(1,2-dicarboxyethyl)-AMP + GDP + phosphate + 2 H(+). The protein operates within purine metabolism; AMP biosynthesis via de novo pathway; AMP from IMP: step 1/2. Functionally, plays an important role in the de novo pathway of purine nucleotide biosynthesis. Catalyzes the first committed step in the biosynthesis of AMP from IMP. This chain is Adenylosuccinate synthetase, found in Brucella anthropi (strain ATCC 49188 / DSM 6882 / CCUG 24695 / JCM 21032 / LMG 3331 / NBRC 15819 / NCTC 12168 / Alc 37) (Ochrobactrum anthropi).